A 329-amino-acid polypeptide reads, in one-letter code: Endonuclease 8-like 2 (329 aa).

The active-site Schiff-base intermediate with DNA is Pro2. The active-site Proton donor is the Glu3. Lys50 (proton donor; for beta-elimination activity) is an active-site residue. N6-acetyllysine is present on Lys50. Position 68 is a phosphoserine (Ser68). Residues 68–116 are disordered; sequence SLLSEPLREGEQKDKARHHQEASDPSSWSPGGDSAVPSGDDGLQCLGGD. Positions 73–89 are enriched in basic and acidic residues; it reads PLREGEQKDKARHHQEA. Over residues 90 to 102 the composition is skewed to low complexity; it reads SDPSSWSPGGDSA. The residue at position 149 (Lys149) is an N6-acetyllysine. Asn227 contacts DNA. An FPG-type zinc finger spans residues 280-316; it reads QIYQKEQCPAGHQVVRESLGPPGGFQRLTWWCPQCQP. The active-site Proton donor; for delta-elimination activity is Arg306.

It belongs to the FPG family. Binds EP300.

It is found in the nucleus. The catalysed reaction is 2'-deoxyribonucleotide-(2'-deoxyribose 5'-phosphate)-2'-deoxyribonucleotide-DNA = a 3'-end 2'-deoxyribonucleotide-(2,3-dehydro-2,3-deoxyribose 5'-phosphate)-DNA + a 5'-end 5'-phospho-2'-deoxyribonucleoside-DNA + H(+). Acetylation of Lys-50 leads to loss of DNA nicking activity. Functionally, involved in base excision repair of DNA damaged by oxidation or by mutagenic agents. Has DNA glycosylase activity towards 5-hydroxyuracil and other oxidized derivatives of cytosine with a preference for mismatched double-stranded DNA (DNA bubbles). Has low or no DNA glycosylase activity towards thymine glycol, 2-hydroxyadenine, hypoxanthine and 8-oxoguanine. Has AP (apurinic/apyrimidinic) lyase activity and introduces nicks in the DNA strand. Cleaves the DNA backbone by beta-delta elimination to generate a single-strand break at the site of the removed base with both 3'- and 5'-phosphates. The sequence is that of Endonuclease 8-like 2 (NEIL2) from Bos taurus (Bovine).